A 427-amino-acid polypeptide reads, in one-letter code: Adenylosuccinate synthetase (427 aa).

GTP contacts are provided by residues 12–18 and 40–42; these read GDEGKGK and GHT. D13 serves as the catalytic Proton acceptor. Residues D13 and G40 each coordinate Mg(2+). IMP contacts are provided by residues 13–16, 38–41, T128, R142, Q223, T238, and R302; these read DEGK and NAGH. H41 (proton donor) is an active-site residue. 298-304 is a substrate binding site; sequence TTTGRPR. GTP-binding positions include R304, 330-332, and 412-414; these read KLD and AVG.

Belongs to the adenylosuccinate synthetase family. Homodimer. Mg(2+) serves as cofactor.

The protein localises to the cytoplasm. It catalyses the reaction IMP + L-aspartate + GTP = N(6)-(1,2-dicarboxyethyl)-AMP + GDP + phosphate + 2 H(+). The protein operates within purine metabolism; AMP biosynthesis via de novo pathway; AMP from IMP: step 1/2. Functionally, plays an important role in the de novo pathway of purine nucleotide biosynthesis. Catalyzes the first committed step in the biosynthesis of AMP from IMP. The protein is Adenylosuccinate synthetase of Heliobacterium modesticaldum (strain ATCC 51547 / Ice1).